The primary structure comprises 197 residues: Histocompatibility antigen 60c (197 aa).

The N-terminal stretch at 1–17 (MALLLLILESCSAGTYA) is a signal peptide. 3 N-linked (GlcNAc...) asparagine glycosylation sites follow: N51, N81, and N114. Residue S177 is the site of GPI-anchor amidated serine attachment. A propeptide spans 178 to 197 (MACKSSPFDGLIMILLIYIL) (removed in mature form).

The protein belongs to the NKG2D ligand family. In terms of tissue distribution, expressed in skin, and weakly in large intestine.

Its subcellular location is the cell membrane. Functionally, ligand for the KLRK1 immunosurveillance receptor. Binding to KLRK1 stimulates cell lysis in vitro. This is Histocompatibility antigen 60c from Mus musculus (Mouse).